The sequence spans 511 residues: Phosphomethylpyrimidine synthase (511 aa).

Substrate contacts are provided by residues Asn-127, Met-156, Tyr-185, His-221, 241–243 (SRG), 282–285 (DGLR), and Glu-321. A Zn(2+)-binding site is contributed by His-325. Tyr-348 is a substrate binding site. His-389 contacts Zn(2+). 3 residues coordinate [4Fe-4S] cluster: Cys-469, Cys-472, and Cys-477. The interval 492–511 (KGMEEKSEVTICNRKKESGK) is disordered.

Belongs to the ThiC family. [4Fe-4S] cluster serves as cofactor.

The catalysed reaction is 5-amino-1-(5-phospho-beta-D-ribosyl)imidazole + S-adenosyl-L-methionine = 4-amino-2-methyl-5-(phosphooxymethyl)pyrimidine + CO + 5'-deoxyadenosine + formate + L-methionine + 3 H(+). Its pathway is cofactor biosynthesis; thiamine diphosphate biosynthesis. Its function is as follows. Catalyzes the synthesis of the hydroxymethylpyrimidine phosphate (HMP-P) moiety of thiamine from aminoimidazole ribotide (AIR) in a radical S-adenosyl-L-methionine (SAM)-dependent reaction. This chain is Phosphomethylpyrimidine synthase, found in Leptospira borgpetersenii serovar Hardjo-bovis (strain JB197).